The sequence spans 745 residues: 5-methyltetrahydropteroyltriglutamate--homocysteine methyltransferase (745 aa).

5-methyltetrahydropteroyltri-L-glutamate contacts are provided by residues 17 to 20 (RELK) and Lys111. L-homocysteine contacts are provided by residues 421 to 423 (IGS) and Glu474. Residues 421–423 (IGS) and Glu474 each bind L-methionine. Residues 505-506 (RC) and Trp551 each bind 5-methyltetrahydropteroyltri-L-glutamate. Asp589 is a binding site for L-homocysteine. Residue Asp589 participates in L-methionine binding. Glu595 serves as a coordination point for 5-methyltetrahydropteroyltri-L-glutamate. Zn(2+) is bound by residues His631, Cys633, and Glu655. His684 serves as the catalytic Proton donor. Residue Cys716 coordinates Zn(2+).

This sequence belongs to the vitamin-B12 independent methionine synthase family. The cofactor is Zn(2+).

It carries out the reaction 5-methyltetrahydropteroyltri-L-glutamate + L-homocysteine = tetrahydropteroyltri-L-glutamate + L-methionine. The protein operates within amino-acid biosynthesis; L-methionine biosynthesis via de novo pathway; L-methionine from L-homocysteine (MetE route): step 1/1. Functionally, catalyzes the transfer of a methyl group from 5-methyltetrahydrofolate to homocysteine resulting in methionine formation. This Thermodesulfovibrio yellowstonii (strain ATCC 51303 / DSM 11347 / YP87) protein is 5-methyltetrahydropteroyltriglutamate--homocysteine methyltransferase.